The chain runs to 400 residues: Argininosuccinate synthase (400 aa).

8–16 (AYSGGLDTS) serves as a coordination point for ATP. Tyr-87 provides a ligand contact to L-citrulline. Gly-117 provides a ligand contact to ATP. L-aspartate-binding residues include Thr-119, Asn-123, and Asp-124. Asn-123 provides a ligand contact to L-citrulline. L-citrulline contacts are provided by Arg-127, Ser-175, Glu-260, and Tyr-272.

The protein belongs to the argininosuccinate synthase family. Type 1 subfamily. As to quaternary structure, homotetramer.

It is found in the cytoplasm. It carries out the reaction L-citrulline + L-aspartate + ATP = 2-(N(omega)-L-arginino)succinate + AMP + diphosphate + H(+). It functions in the pathway amino-acid biosynthesis; L-arginine biosynthesis; L-arginine from L-ornithine and carbamoyl phosphate: step 2/3. This Mycobacterium sp. (strain KMS) protein is Argininosuccinate synthase.